The sequence spans 130 residues: T-cell receptor alpha chain V region PHDS58 (130 aa).

The first 20 residues, 1–20, serve as a signal peptide directing secretion; it reads MLLALLPVLGIHFVLRDAQA. The segment at 21–114 is v segment; it reads QSVTQPDARV…SAVYFCAVSG (94 aa). An N-linked (GlcNAc...) asparagine glycan is attached at asparagine 90. The tract at residues 115–130 is j segment; sequence FASALTFGSGTKVIVL.

In Mus musculus (Mouse), this protein is T-cell receptor alpha chain V region PHDS58.